The chain runs to 376 residues: 1-acyl-sn-glycerol-3-phosphate acyltransferase gamma (376 aa).

At 1 to 124 the chain is on the cytoplasmic side; that stretch reads MGLLAYLKTQ…LGSSKVLAKR (124 aa). Residues 96–101 carry the HXXXXD motif motif; sequence HNFEID. Residues 125-145 traverse the membrane as a helical segment; the sequence is ELLCVPLIGWTWYFLEIVFCK. The Lumenal portion of the chain corresponds to 146–316; sequence RKWEEDRDTV…TLLNFLCWAT (171 aa). A helical membrane pass occupies residues 317–339; that stretch reads ILLSPLFSFVLGVFASGSPLLIL. At 340–376 the chain is on the cytoplasmic side; that stretch reads TFLGFVGAASFGVRRLIGVTEIEKGSSYGNQELKKKE.

It belongs to the 1-acyl-sn-glycerol-3-phosphate acyltransferase family. In terms of tissue distribution, widely expressed. Mainly expressed in testis, kidney and liver (at protein level).

Its subcellular location is the endoplasmic reticulum membrane. The protein resides in the nucleus envelope. It catalyses the reaction a 1-acyl-sn-glycero-3-phosphate + an acyl-CoA = a 1,2-diacyl-sn-glycero-3-phosphate + CoA. The catalysed reaction is pentadecanoyl-CoA + 1-(9Z-octadecenoyl)-sn-glycero-3-phosphate = 1-(9Z)-octadecenoyl-2-pentadecanoyl-sn-glycero-3-phosphate + CoA. The enzyme catalyses heptadecanoyl-CoA + 1-(9Z-octadecenoyl)-sn-glycero-3-phosphate = 1-(9Z)-octadecenoyl-2-heptadecanoyl-sn-glycero-3-phosphate + CoA. It carries out the reaction 1-(9Z-octadecenoyl)-sn-glycero-3-phosphate + octadecanoyl-CoA = 1-(9Z-octadecenoyl)-2-octadecanoyl-sn-glycero-3-phosphate + CoA. It catalyses the reaction nonadecanoyl-CoA + 1-(9Z-octadecenoyl)-sn-glycero-3-phosphate = 1-(9Z)-octadecenoyl-2-nonadecanoyl-sn-glycero-3-phosphate + CoA. The catalysed reaction is 1-(9Z-octadecenoyl)-sn-glycero-3-phosphate + (5Z,8Z,11Z,14Z)-eicosatetraenoyl-CoA = 1-(9Z)-octadecenoyl-2-(5Z,8Z,11Z,14Z)-eicosatetraenoyl-sn-glycero-3-phosphate + CoA. The enzyme catalyses 1-(9Z-octadecenoyl)-sn-glycero-3-phosphate + (9Z)-octadecenoyl-CoA = 1,2-di-(9Z-octadecenoyl)-sn-glycero-3-phosphate + CoA. It carries out the reaction 1-(9Z-octadecenoyl)-sn-glycero-3-phosphate + (9Z,12Z)-octadecadienoyl-CoA = 1-(9Z)-octadecenoyl-2-(9Z,12Z)-octadecadienoyl-sn-glycero-3-phosphate + CoA. It catalyses the reaction 1-(9Z-octadecenoyl)-sn-glycero-3-phosphocholine + (5Z,8Z,11Z,14Z)-eicosatetraenoyl-CoA = 1-(9Z)-octadecenoyl-2-(5Z,8Z,11Z,14Z)-icosatetraenoyl-sn-glycero-3-phosphocholine + CoA. The catalysed reaction is 1-(9Z-octadecenoyl)-sn-glycero-3-phospho-(1D-myo-inositol) + (5Z,8Z,11Z,14Z)-eicosatetraenoyl-CoA = 1-(9Z-octadecenoyl)-2-(5Z,8Z,11Z,14Z-eicosatetraenoyl)-sn-glycero-3-phospho-1D-myo-inositol + CoA. The enzyme catalyses 1-(9Z-octadecenoyl)-sn-glycero-3-phospho-L-serine + (5Z,8Z,11Z,14Z)-eicosatetraenoyl-CoA = 1-(9Z-octadecenoyl)-2-(5Z,8Z,11Z,14Z-eicosatetraenoyl)-sn-glycero-3-phospho-L-serine + CoA. It carries out the reaction 1-hexadecanoyl-sn-glycero-3-phosphate + (9Z)-octadecenoyl-CoA = 1-hexadecanoyl-2-(9Z-octadecenoyl)-sn-glycero-3-phosphate + CoA. It catalyses the reaction 1-hexadecanoyl-sn-glycero-3-phosphate + (5Z,8Z,11Z,14Z)-eicosatetraenoyl-CoA = 1-hexadecanoyl-2-(5Z,8Z,11Z,14Z-eicosatetraenoyl)-sn-glycero-3-phosphate + CoA. The catalysed reaction is 1-heptadecanoyl-sn-glycero-3-phosphate + (5Z,8Z,11Z,14Z)-eicosatetraenoyl-CoA = 1-heptadecanoyl-2-(5Z,8Z,11Z,14Z)-eicosatetraenoyl-sn-glycero-3-phosphate + CoA. The enzyme catalyses 1-octadecanoyl-sn-glycero-3-phosphate + (9Z)-octadecenoyl-CoA = 1-octadecanoyl-2-(9Z-octadecenoyl)-sn-glycero-3-phosphate + CoA. It carries out the reaction 1-octadecanoyl-sn-glycero-3-phosphate + (5Z,8Z,11Z,14Z)-eicosatetraenoyl-CoA = 1-octadecanoyl-2-(5Z,8Z,11Z,14Z-eicosatetraenoyl)-sn-glycero-3-phosphate + CoA. It catalyses the reaction 1-(9Z-octadecenoyl)-sn-glycero-3-phosphate + hexadecanoyl-CoA = 1-hexadecanoyl-2-(9Z-octadecenoyl)-sn-glycero-3-phosphate + CoA. The catalysed reaction is 1-O-(9Z-octadecenyl)-sn-glycero-3-phosphate + (5Z,8Z,11Z,14Z)-eicosatetraenoyl-CoA = 1-O-(9Z-octadecenyl)-2-(5Z,8Z,11Z,14Z-eicosatetraenoyl)-sn-glycero-3-phosphate + CoA. The enzyme catalyses a 1-acyl-sn-glycero-3-phospho-(1D-myo-inositol) + (5Z,8Z,11Z,14Z)-eicosatetraenoyl-CoA = a 1-acyl-2-(5Z,8Z,11Z,14Z-eicosatetraenoyl)-sn-glycero-3-phospho-(1D-myo-inositol) + CoA. It functions in the pathway phospholipid metabolism; CDP-diacylglycerol biosynthesis; CDP-diacylglycerol from sn-glycerol 3-phosphate: step 2/3. In males, activity increases in an age-dependent fashion, maybe derived from the induction by sex-hormones. Converts 1-acyl-sn-glycerol-3-phosphate (lysophosphatidic acid or LPA) into 1,2-diacyl-sn-glycerol-3-phosphate (phosphatidic acid or PA) by incorporating an acyl moiety at the sn-2 position of the glycerol backbone. Acts on LPA containing saturated or unsaturated fatty acids C16:0-C20:4 at the sn-1 position using C18:1, C20:4 or C18:2-CoA as the acyl donor. Also acts on lysophosphatidylcholine, lysophosphatidylinositol and lysophosphatidylserine using C18:1 or C20:4-CoA. Has a preference for arachidonoyl-CoA as a donor. Also has a modest lysophosphatidylinositol acyltransferase (LPIAT) activity, converts lysophosphatidylinositol (LPI) into phosphatidylinositol. The polypeptide is 1-acyl-sn-glycerol-3-phosphate acyltransferase gamma (Mus musculus (Mouse)).